Consider the following 995-residue polypeptide: Integrator complex subunit 8 (995 aa).

A Phosphothreonine modification is found at Thr18. A WFEF motif motif is present at residues 24–29; that stretch reads WFEFLL. TPR repeat units lie at residues 250-288, 320-356, 570-603, and 833-866; these read CQVCYDLGAAYFQQGSTDSAIYENAREKFFRTKELLAEI, SQQLTPYSQVHICLRSGSYQEVVQIFIEDNLTFTLPV, VYILMAKGLHCSTVKDFPHSKQLFTACLELVTEF, and HAWLIIQADIYFATNQHSAALHYYLQAGAVCSDF.

The protein belongs to the Integrator subunit 8 family. As to quaternary structure, component of the Integrator complex, composed of core subunits INTS1, INTS2, INTS3, INTS4, INTS5, INTS6, INTS7, INTS8, INTS9/RC74, INTS10, INTS11/CPSF3L, INTS12, INTS13, INTS14 and INTS15. The core complex associates with protein phosphatase 2A subunits PPP2CA and PPP2R1A, to form the Integrator-PP2A (INTAC) complex.

It is found in the nucleus. It localises to the chromosome. In terms of biological role, component of the integrator complex, a multiprotein complex that terminates RNA polymerase II (Pol II) transcription in the promoter-proximal region of genes. The integrator complex provides a quality checkpoint during transcription elongation by driving premature transcription termination of transcripts that are unfavorably configured for transcriptional elongation: the complex terminates transcription by (1) catalyzing dephosphorylation of the C-terminal domain (CTD) of Pol II subunit POLR2A/RPB1 and SUPT5H/SPT5, (2) degrading the exiting nascent RNA transcript via endonuclease activity and (3) promoting the release of Pol II from bound DNA. The integrator complex is also involved in terminating the synthesis of non-coding Pol II transcripts, such as enhancer RNAs (eRNAs), small nuclear RNAs (snRNAs), telomerase RNAs and long non-coding RNAs (lncRNAs). Within the integrator complex, INTS8 is required for the recruitment of protein phosphatase 2A (PP2A) to transcription pause-release checkpoint. This is Integrator complex subunit 8 (Ints8) from Mus musculus (Mouse).